The following is a 165-amino-acid chain: E3 ubiquitin-protein ligase RNF181 (165 aa).

The RING-type; atypical zinc finger occupies 88 to 129 (CPVCLLEFEAEETVIEMPCHHLFHSNCILPWLSKTNSCPLCR). The tract at residues 136–165 (DDSYEEHKKDKARRQQQQHRLENLHGAMYT) is disordered. Phosphothreonine is present on T165.

The protein belongs to the RNF181 family. Directly interacts with ITGA2B and, as a result, with integrin ITGA2B/ITGB3. There is no evidence that integrin ITGA2B/ITGB3 is an endogenous substrate for RNF181-directed ubiquitination. In terms of processing, auto-ubiquitinated as part of the enzymatic reaction.

It catalyses the reaction S-ubiquitinyl-[E2 ubiquitin-conjugating enzyme]-L-cysteine + [acceptor protein]-L-lysine = [E2 ubiquitin-conjugating enzyme]-L-cysteine + N(6)-ubiquitinyl-[acceptor protein]-L-lysine.. The protein operates within protein modification; protein ubiquitination. Its function is as follows. E3 ubiquitin-protein ligase which accepts ubiquitin from an E2 ubiquitin-conjugating enzyme in the form of a thioester and then directly transfers the ubiquitin to targeted substrates. Catalyzes monoubiquitination of 26S proteasome subunit PSMC2/RPT1. This is E3 ubiquitin-protein ligase RNF181 from Mus musculus (Mouse).